The primary structure comprises 307 residues: UDP-3-O-acyl-N-acetylglucosamine deacetylase (307 aa).

Residues His78, His241, and Asp245 each contribute to the Zn(2+) site. His268 acts as the Proton donor in catalysis.

It belongs to the LpxC family. Zn(2+) serves as cofactor.

The catalysed reaction is a UDP-3-O-[(3R)-3-hydroxyacyl]-N-acetyl-alpha-D-glucosamine + H2O = a UDP-3-O-[(3R)-3-hydroxyacyl]-alpha-D-glucosamine + acetate. It participates in glycolipid biosynthesis; lipid IV(A) biosynthesis; lipid IV(A) from (3R)-3-hydroxytetradecanoyl-[acyl-carrier-protein] and UDP-N-acetyl-alpha-D-glucosamine: step 2/6. Catalyzes the hydrolysis of UDP-3-O-myristoyl-N-acetylglucosamine to form UDP-3-O-myristoylglucosamine and acetate, the committed step in lipid A biosynthesis. The sequence is that of UDP-3-O-acyl-N-acetylglucosamine deacetylase from Bordetella avium (strain 197N).